The primary structure comprises 86 residues: Large ribosomal subunit protein bL28 (86 aa).

The protein belongs to the bacterial ribosomal protein bL28 family.

The protein is Large ribosomal subunit protein bL28 of Bacteroides thetaiotaomicron (strain ATCC 29148 / DSM 2079 / JCM 5827 / CCUG 10774 / NCTC 10582 / VPI-5482 / E50).